Here is a 228-residue protein sequence, read N- to C-terminus: tRNA (guanine-N(1)-)-methyltransferase (228 aa).

Residues G111 and 130–135 (IGDFVL) contribute to the S-adenosyl-L-methionine site.

Belongs to the RNA methyltransferase TrmD family. As to quaternary structure, homodimer.

It localises to the cytoplasm. The catalysed reaction is guanosine(37) in tRNA + S-adenosyl-L-methionine = N(1)-methylguanosine(37) in tRNA + S-adenosyl-L-homocysteine + H(+). In terms of biological role, specifically methylates guanosine-37 in various tRNAs. This is tRNA (guanine-N(1)-)-methyltransferase from Ureaplasma parvum serovar 3 (strain ATCC 27815 / 27 / NCTC 11736).